Consider the following 683-residue polypeptide: Methionine--tRNA ligase (683 aa).

The 'HIGH' region motif lies at 14 to 24; the sequence is PYANGSIHLGH. 4 residues coordinate Zn(2+): C145, C148, C158, and C161. Residues 331-335 carry the 'KMSKS' region motif; the sequence is KMSKS. K334 lines the ATP pocket. The tract at residues 545–572 is disordered; sequence ASKEDLTASQTDTGAAAPAGNGELAKDP. The 103-residue stretch at 581-683 folds into the tRNA-binding domain; it reads TFAAVDLRVA…SGAKPGQRIK (103 aa).

This sequence belongs to the class-I aminoacyl-tRNA synthetase family. MetG type 1 subfamily. In terms of assembly, homodimer. Requires Zn(2+) as cofactor.

It localises to the cytoplasm. The catalysed reaction is tRNA(Met) + L-methionine + ATP = L-methionyl-tRNA(Met) + AMP + diphosphate. In terms of biological role, is required not only for elongation of protein synthesis but also for the initiation of all mRNA translation through initiator tRNA(fMet) aminoacylation. The sequence is that of Methionine--tRNA ligase from Pseudomonas fluorescens (strain Pf0-1).